Here is a 409-residue protein sequence, read N- to C-terminus: Argininosuccinate synthase (409 aa).

ATP contacts are provided by residues 10–18 (AYSGGLDTS) and alanine 37. Positions 90 and 95 each coordinate L-citrulline. Glycine 120 is a binding site for ATP. Residues threonine 122, asparagine 126, and aspartate 127 each contribute to the L-aspartate site. Asparagine 126 lines the L-citrulline pocket. The L-citrulline site is built by arginine 130, serine 182, serine 191, glutamate 267, and tyrosine 279.

It belongs to the argininosuccinate synthase family. Type 1 subfamily. Homotetramer.

Its subcellular location is the cytoplasm. The catalysed reaction is L-citrulline + L-aspartate + ATP = 2-(N(omega)-L-arginino)succinate + AMP + diphosphate + H(+). Its pathway is amino-acid biosynthesis; L-arginine biosynthesis; L-arginine from L-ornithine and carbamoyl phosphate: step 2/3. This Thiobacillus denitrificans (strain ATCC 25259 / T1) protein is Argininosuccinate synthase.